A 770-amino-acid polypeptide reads, in one-letter code: Endothelin-converting enzyme 1 (770 aa).

Residues 1-68 (MRGVWPPPVS…WAARTQVEKR (68 aa)) are Cytoplasmic-facing. Thr25 carries the phosphothreonine modification. A helical; Signal-anchor for type II membrane protein membrane pass occupies residues 69–89 (LVVLVVLLAAGLVACLAALGI). The Extracellular segment spans residues 90–770 (QYQTRSPSVC…MNPPHKCEVW (681 aa)). Residues 98–770 (VCLSEACVSV…MNPPHKCEVW (673 aa)) enclose the Peptidase M13 domain. Cystine bridges form between Cys99–Cys104, Cys122–Cys755, Cys130–Cys715, Cys185–Cys435, and Cys644–Cys767. Residues Asn166, Asn187, Asn210, Asn270, Asn316, Asn362, Asn383, and Asn539 are each glycosylated (N-linked (GlcNAc...) asparagine). Residue His607 coordinates Zn(2+). Residue Glu608 is part of the active site. Residue His611 participates in Zn(2+) binding. N-linked (GlcNAc...) asparagine glycans are attached at residues Asn632 and Asn651. Glu667 contributes to the Zn(2+) binding site. Asp671 serves as the catalytic Proton donor.

This sequence belongs to the peptidase M13 family. In terms of assembly, homodimer; disulfide-linked. Interacts with PPP1R16B. Interacts with TSPAN8; this interaction recruits the endothelin converting enzyme ECE1 to tetraspanin-enriched microdomains and positively modulates its enzymatic activity. Zn(2+) serves as cofactor. In terms of tissue distribution, all isoforms are expressed in umbilical vein endothelial cells, polynuclear neutrophils, fibroblasts, atrium cardiomyocytes and ventricles. Isoforms A, B and C are also expressed in placenta, lung, heart, adrenal gland and phaeochromocytoma; isoforms A and C in liver, testis and small intestine; isoform B, C and D in endothelial cells and umbilical vein smooth muscle cells; isoforms C and D in saphenous vein cells, and isoform C in kidney.

It localises to the cell membrane. It catalyses the reaction Hydrolysis of the 21-Trp-|-Val-22 bond in big endothelin to form endothelin 1.. Its activity is regulated as follows. Inhibited by phosphoramidon. Activated by K49-P1-20, a twenty-residue synthetic peptide shortened from the snake B.asper myotoxin II. Its function is as follows. Converts big endothelin-1 to endothelin-1. The chain is Endothelin-converting enzyme 1 (ECE1) from Homo sapiens (Human).